The primary structure comprises 130 residues: Seminal plasma protein pB1 (130 aa).

The signal sequence occupies residues 1 to 25; it reads MAPRLGIFLLWAGVSVFLPLDPVNG. Fibronectin type-II domains are found at residues 39–83 and 84–130; these read TSDD…YCRS and TDYA…WRYC. Intrachain disulfides connect cysteine 44/cysteine 68, cysteine 58/cysteine 81, cysteine 89/cysteine 115, and cysteine 103/cysteine 130.

It belongs to the seminal plasma protein family. In terms of tissue distribution, component of seminal plasma.

It is found in the secreted. Functionally, may form a complex with spermadhesin AQN-1 which possesses phosphorylcholine-binding activity. This chain is Seminal plasma protein pB1, found in Sus scrofa (Pig).